Here is a 521-residue protein sequence, read N- to C-terminus: MASSRASSTTTKTKAPDDLVAPVVKKPHIYYGSLEEKERERLAKGESGILGKEGLKAGIEAGNINITSGEVFEIEEHISERQAEVLAEFERRKRARQINVSTDDSEVKACLRALGEPITLFGEGPAERRERLRNILSVVGTDALKKTKKDDEKSKKSKEEYQQTWYHEGPNSLKVARLWIANYSLPRAMKRLEEARLHKEIPETTRTSQMQELHKSLRSLNNFCSQIGDDRPISYCHFSPNSKMLATACWSGLCKLWSVPDCSLLHTLRGHNTNVGAIVFHPKSTVSLDQKDVNLASCAADGSVKLWSLDSDEPVADIEGHTVRVARVMWHPSGRFLGTTCYDRSWRLWDLEAQEEILHQEGHSMGVYDIAFHQDGSLAGTGGLDAFGRVWDLRTGRCIMFLEGHLKEIYGINFSPNGYHIATGSGDNTCKVWDLRQRRCVYTIPAHQNLVTGVKFEPIHGDFLLTGAYDNTAKIWTHPGWSPLKTLAGHEGKVMGLDISSDGQLIATCSYDRTFKLWMAE.

The residue at position 26 (Lys26) is an N6-acetyllysine. WD repeat units lie at residues 228 to 267 (GDDR…LLHT), 270 to 317 (GHNT…PVAD), 320 to 359 (GHTV…EILH), 362 to 401 (GHSM…CIMF), 404 to 443 (GHLK…CVYT), 446 to 486 (AHQN…PLKT), and 489 to 521 (GHEG…WMAE).

In terms of assembly, component of the precatalytic spliceosome (spliceosome B complex). Component of the U4/U6-U5 tri-snRNP complex, a building block of the precatalytic spliceosome (spliceosome B complex). The U4/U6-U5 tri-snRNP complex is composed of the U4, U6 and U5 snRNAs and at least PRPF3, PRPF4, PRPF6, PRPF8, PRPF31, SNRNP200, TXNL4A, SNRNP40, SNRPB, SNRPD1, SNRPD2, SNRPD3, SNRPE, SNRPF, SNRPG, DDX23, CD2BP2, PPIH, SNU13, EFTUD2, SART1 and USP39, plus LSM2, LSM3, LSM4, LSM5, LSM6, LSM7 and LSM8. Interacts directly with PRPF18, PPIH and PRPF3. Part of a heteromeric complex containing PPIH, PRPF3 and PRPF4 that is stable in the absence of RNA. Interacts with ERCC6.

The protein resides in the nucleus. It is found in the nucleus speckle. In terms of biological role, plays a role in pre-mRNA splicing as component of the U4/U6-U5 tri-snRNP complex that is involved in spliceosome assembly, and as component of the precatalytic spliceosome (spliceosome B complex). This is U4/U6 small nuclear ribonucleoprotein Prp4 (Prpf4) from Mus musculus (Mouse).